Here is a 78-residue protein sequence, read N- to C-terminus: UPF0291 protein LBUL_1264 (78 aa).

Belongs to the UPF0291 family.

Its subcellular location is the cytoplasm. The sequence is that of UPF0291 protein LBUL_1264 from Lactobacillus delbrueckii subsp. bulgaricus (strain ATCC BAA-365 / Lb-18).